The following is a 406-amino-acid chain: 3-isopropylmalate dehydrogenase, chloroplastic (406 aa).

A chloroplast-targeting transit peptide spans 1 to 34; that stretch reads MAAALQTNIRPVKFPATLRALTKQSSPAPFRVRC. Ser-71 is subject to Phosphoserine. An NAD(+)-binding site is contributed by 117-130; it reads GYKWDKNEKHLKPE. Positions 137, 147, 175, and 265 each coordinate substrate. 3 residues coordinate Mg(2+): Asp-265, Asp-289, and Asp-293. 323-335 is a binding site for NAD(+); it reads GSAPDIAGQDKAN.

The protein belongs to the isocitrate and isopropylmalate dehydrogenases family. In terms of assembly, homodimer. Mg(2+) is required as a cofactor. Requires Mn(2+) as cofactor.

The protein localises to the plastid. Its subcellular location is the chloroplast. It carries out the reaction (2R,3S)-3-isopropylmalate + NAD(+) = 4-methyl-2-oxopentanoate + CO2 + NADH. It participates in amino-acid biosynthesis; L-leucine biosynthesis; L-leucine from 3-methyl-2-oxobutanoate: step 3/4. Its function is as follows. Catalyzes the oxidation of 3-carboxy-2-hydroxy-4-methylpentanoate (3-isopropylmalate) to 3-carboxy-4-methyl-2-oxopentanoate. The product decarboxylates to 4-methyl-2 oxopentanoate. This chain is 3-isopropylmalate dehydrogenase, chloroplastic, found in Brassica napus (Rape).